Consider the following 145-residue polypeptide: Polytheonamide B (145 aa).

Residues 1–96 (MADSDNTPTS…DDDLDQAAGG (96 aa)) constitute a propeptide that is removed on maturation. Position 97 is a 2-oxo-5,5-dimethylhexanoate (Thr-97). Ile-99 is modified (3-methylisoleucine). Val-101 is modified (3-methylvaline). Val-102 is modified (3-methyl-D-valine). 3-methylvaline is present on Val-103. Residue Ala-104 is modified to D-alanine (Ala). Val-105 is subject to 3-methylvaline. A 3-methyl-D-valine mark is found at Val-106 and Val-110. Position 112 is an N4-methyl-D-asparagine (Asn-112). Thr-113 carries the post-translational modification 3-hydroxyvaline (Thr). Position 117 is a 3-methylvaline (Val-117). An N4-methyl-D-asparagine modification is found at Asn-118. Gln-119 carries the post-translational modification (3S)-3-methylglutamine. 3-hydroxy-D-valine is present on Val-120. N4-methyl-D-asparagine is present on Asn-124. Asn-126 carries the post-translational modification (3R)-N4-methyl-3-hydroxy-D-asparagine. Val-127 carries the 3-methylvaline modification. Val-128 is subject to 3-hydroxy-D-valine. An N4-methyl-D-asparagine mark is found at Asn-130 and Asn-132. Asn-134 is modified ((3R)-N4-methyl-3-hydroxy-D-asparagine). Asn-136 is modified (N4-methyl-D-asparagine). Ser-138 carries the post-translational modification D-serine (Ser). The residue at position 140 (Asn-140) is a D-asparagine. Met-141 carries the 3,3-dimethylmethionine modification. Asn-142 is modified (D-asparagine). At Thr-144 the chain carries D-threonine.

In terms of processing, epimerization of most, and perhaps all, L- to D-amino acids is catalyzed by PoyD, when PoyA and PoyD are coexpressed in E.coli. N-methylations are catalyzed by PoyE, when PoyA and PoyE are coexpressed in E.coli. Post-translationally, to obtain 2-oxo-5,5-dimethylhexanoate, Thr-97 is firstly dehydrated by PoyF. The second step possibly corresponds to methylation by PoyB/C, and the third step may be a cleavage by PoyH/J.

Functionally, antimicrobial peptide active against Gram-positive bacteria (MIC=4-&gt;125 ug/ml). May act by forming transmembrane ion channels, since the peptide rapidly depolarizes the bacterial cytoplasmic membrane, simultaneously decreasing the membrane potential and intracellular potassium contents. The chain is Polytheonamide B from Bacterium symbiont subsp. Theonella swinhoei (strain pTSMAC1).